Here is a 321-residue protein sequence, read N- to C-terminus: Triplex capsid protein 2 (321 aa).

It belongs to the herpesviridae TRX2 protein family. In terms of assembly, interacts with TRX1 and major capisd protein/MCP.

The protein resides in the virion. The protein localises to the host nucleus. In terms of biological role, structural component of the T=16 icosahedral capsid. The capsid is composed of pentamers and hexamers of major capsid protein/MCP, which are linked together by heterotrimers called triplexes. These triplexes are formed by a single molecule of triplex protein 1/TRX1 and two copies of triplex protein 2/TRX2. Additionally, TRX1 is required for efficient transport of TRX2 to the nucleus, which is the site of capsid assembly. This chain is Triplex capsid protein 2, found in Amazona oratrix (yellow-headed parrot).